Consider the following 365-residue polypeptide: tRNA N6-adenosine threonylcarbamoyltransferase (365 aa).

2 residues coordinate Fe cation: His-119 and His-123. Substrate-binding positions include 141 to 145 (LVSGG), Asp-174, and Gly-187. Residues 184–203 (QPGGPSVEGEARQGDPKRFR) form a disordered region. Basic and acidic residues predominate over residues 192–201 (GEARQGDPKR). Residue Asn-289 participates in substrate binding. Residue Asp-317 participates in Fe cation binding. The disordered stretch occupies residues 342 to 365 (ARPRWPLDQSSPAMLGSGKKGAKA).

This sequence belongs to the KAE1 / TsaD family. It depends on Fe(2+) as a cofactor.

The protein localises to the cytoplasm. The catalysed reaction is L-threonylcarbamoyladenylate + adenosine(37) in tRNA = N(6)-L-threonylcarbamoyladenosine(37) in tRNA + AMP + H(+). Functionally, required for the formation of a threonylcarbamoyl group on adenosine at position 37 (t(6)A37) in tRNAs that read codons beginning with adenine. Is involved in the transfer of the threonylcarbamoyl moiety of threonylcarbamoyl-AMP (TC-AMP) to the N6 group of A37, together with TsaE and TsaB. TsaD likely plays a direct catalytic role in this reaction. This is tRNA N6-adenosine threonylcarbamoyltransferase from Ruegeria pomeroyi (strain ATCC 700808 / DSM 15171 / DSS-3) (Silicibacter pomeroyi).